A 308-amino-acid polypeptide reads, in one-letter code: Transcriptional adapter 1-2 (308 aa).

The protein belongs to the TADA1 family. Component of the Spt-Ada-Gcn5 acetyltransferase (SAGA) complex consisting of wda/Taf5L, Saf6, Taf9, Taf10b, Taf12, Ada1, Spt3, Spt7, Spt20, Sf3b3, Sf3b5, Nipped-A/Tra1, a histone acetyltransferase (HAT) module made up of Gcn5, Ada2b (Isoform B), Ada3 and Sgf29, and a deubiquitinase (DUB) module made up of not/nonstop, Sgf11 and e(y)2 tethered to SAGA by Atxn7. Not a component of the Ada2a-containing ATAC complex.

The protein resides in the nucleus. Component of the transcription regulatory complex SAGA, a multiprotein complex that activates transcription by remodeling chromatin and mediating histone acetylation and deubiquitination. The SAGA complex predominantly acetylates histone H3. The sequence is that of Transcriptional adapter 1-2 from Drosophila melanogaster (Fruit fly).